A 273-amino-acid chain; its full sequence is Histone H1.2 (273 aa).

Positions 1–63 (MSIEEENVPT…TKKKTTSSHP (63 aa)) are disordered. Ser-2 is subject to N-acetylserine. Ser-14 carries the post-translational modification Phosphoserine. Residues 33–59 (GKSKKTTTAKATKKPVKAAAPTKKKTT) are compositionally biased toward basic residues. One can recognise an H15 domain in the interval 61 to 130 (SHPTYEEMIK…KVKASFKIPS (70 aa)). Residues Lys-156 and Lys-165 each participate in a glycyl lysine isopeptide (Lys-Gly) (interchain with G-Cter in ubiquitin) cross-link. 2 stretches are compositionally biased toward low complexity: residues 193–216 (KVTA…VAAK) and 237–256 (KKVA…PAKS). Residues 193-273 (KVTAAKPKSK…KRASTRKAKK (81 aa)) are disordered. Positions 257-273 (VKVKSPAKRASTRKAKK) are enriched in basic residues.

This sequence belongs to the histone H1/H5 family.

Its subcellular location is the nucleus. The protein resides in the chromosome. Histones H1 are necessary for the condensation of nucleosome chains into higher-order structures. In Arabidopsis thaliana (Mouse-ear cress), this protein is Histone H1.2.